Reading from the N-terminus, the 276-residue chain is Bis(5'-nucleosyl)-tetraphosphatase, symmetrical (276 aa).

Belongs to the Ap4A hydrolase family.

The catalysed reaction is P(1),P(4)-bis(5'-adenosyl) tetraphosphate + H2O = 2 ADP + 2 H(+). In terms of biological role, hydrolyzes diadenosine 5',5'''-P1,P4-tetraphosphate to yield ADP. This chain is Bis(5'-nucleosyl)-tetraphosphatase, symmetrical, found in Dechloromonas aromatica (strain RCB).